The following is a 431-amino-acid chain: MIHTMIAPRRLRGIIDLPGDKSISHRAVLLNAIATGAAEVANFLTGADCLSTIACVQALGVRVERHEDTVRVFGAGLRSLREPVDVLDCGNSGTTLRLLTGMLAGQEGIFAVLTGDASLRSRPQQRIVAPLRALGATLDGRDRGNRAPLVVRGAYLHGGAYDLPIASAQVKSALLLAALFGDGTLTLTGRTDGRDHTERMLAAMGATITVDGQTIRLTPPDRSEALHPLSLRVPGDPSSATFWWVAAALHPDAELTTTGVCLNPTRTGALDALRAMGAQIDVANQRVEGGEPVGDVTVRSSSLHGIVIEGALIPRLIDELPVLALAAACAEGETIIRDAQELRVKETDRIATVVAGLTALGAVVEPTEDGMIIAGGGNLRGATLESHGDHRLAMTWAIAGLVGAGETTLHGAEAVDVSYPEFWNVLRRIRE.

Residues K21, S22, and R26 each coordinate 3-phosphoshikimate. Residue K21 coordinates phosphoenolpyruvate. G93 and R122 together coordinate phosphoenolpyruvate. 3-phosphoshikimate-binding residues include S167, Q169, D318, and K345. Q169 contributes to the phosphoenolpyruvate binding site. The active-site Proton acceptor is D318. Residues R349 and R391 each coordinate phosphoenolpyruvate.

It belongs to the EPSP synthase family. Monomer.

It is found in the cytoplasm. The enzyme catalyses 3-phosphoshikimate + phosphoenolpyruvate = 5-O-(1-carboxyvinyl)-3-phosphoshikimate + phosphate. The protein operates within metabolic intermediate biosynthesis; chorismate biosynthesis; chorismate from D-erythrose 4-phosphate and phosphoenolpyruvate: step 6/7. Functionally, catalyzes the transfer of the enolpyruvyl moiety of phosphoenolpyruvate (PEP) to the 5-hydroxyl of shikimate-3-phosphate (S3P) to produce enolpyruvyl shikimate-3-phosphate and inorganic phosphate. The sequence is that of 3-phosphoshikimate 1-carboxyvinyltransferase from Roseiflexus castenholzii (strain DSM 13941 / HLO8).